Consider the following 353-residue polypeptide: 3-dehydroquinate synthase (353 aa).

It belongs to the archaeal-type DHQ synthase family.

The enzyme catalyses 2-amino-2,3,7-trideoxy-D-lyxo-hept-6-ulosonate + NAD(+) + H2O = 3-dehydroquinate + NH4(+) + NADH + H(+). Functionally, catalyzes the oxidative deamination and cyclization of 2-amino-3,7-dideoxy-D-threo-hept-6-ulosonic acid (ADH) to yield 3-dehydroquinate (DHQ), which is fed into the canonical shikimic pathway of aromatic amino acid biosynthesis. This chain is 3-dehydroquinate synthase, found in Nitrosopumilus maritimus (strain SCM1).